The chain runs to 62 residues: UPF0434 protein FTM_0733 (62 aa).

This sequence belongs to the UPF0434 family.

The polypeptide is UPF0434 protein FTM_0733 (Francisella tularensis subsp. mediasiatica (strain FSC147)).